The primary structure comprises 130 residues: Large ribosomal subunit protein bL12 (130 aa).

This sequence belongs to the bacterial ribosomal protein bL12 family. Homodimer. Part of the ribosomal stalk of the 50S ribosomal subunit. Forms a multimeric L10(L12)X complex, where L10 forms an elongated spine to which 2 to 4 L12 dimers bind in a sequential fashion. Binds GTP-bound translation factors.

Functionally, forms part of the ribosomal stalk which helps the ribosome interact with GTP-bound translation factors. Is thus essential for accurate translation. The chain is Large ribosomal subunit protein bL12 from Mycolicibacterium gilvum (strain PYR-GCK) (Mycobacterium gilvum (strain PYR-GCK)).